The chain runs to 176 residues: T cell receptor beta constant 1 (176 aa).

An Ig-like C1-type domain is found at 8-117 (PEVAVFEPSE…WTQDRAKPVT (110 aa)). Cys30 and Cys95 are joined by a disulfide. Residue Asn69 is glycosylated (N-linked (GlcNAc...) asparagine). The connecting peptide stretch occupies residues 130–144 (CGFTSVSYQQGVLSA). Residues 150–170 (ILLGKATLYAVLVSALVLMAM) form a helical membrane-spanning segment. At 171-176 (VKRKDF) the chain is on the cytoplasmic side.

In terms of assembly, alpha-beta TR is a heterodimer composed of an alpha and beta chain; disulfide-linked. The alpha-beta TR is associated with the transmembrane signaling CD3 coreceptor proteins to form the TR-CD3 (TcR or TCR). The assembly of alpha-beta TR heterodimers with CD3 occurs in the endoplasmic reticulum where a single alpha-beta TR heterodimer associates with one CD3D-CD3E heterodimer, one CD3G-CD3E heterodimer and one CD247 homodimer forming a stable octameric structure. CD3D-CD3E and CD3G-CD3E heterodimers preferentially associate with TR alpha and TR beta chains, respectively. The association of the CD247 homodimer is the last step of TcR assembly in the endoplasmic reticulum and is required for transport to the cell surface.

The protein localises to the cell membrane. Constant region of T cell receptor (TR) beta chain. Alpha-beta T cell receptors are antigen specific receptors which are essential to the immune response and are present on the cell surface of T lymphocytes. Recognize peptide-major histocompatibility (MH) (pMH) complexes that are displayed by antigen presenting cells (APC), a prerequisite for efficient T cell adaptive immunity against pathogens. Binding of alpha-beta TR to pMH complex initiates TR-CD3 clustering on the cell surface and intracellular activation of LCK that phosphorylates the ITAM motifs of CD3G, CD3D, CD3E and CD247 enabling the recruitment of ZAP70. In turn, ZAP70 phosphorylates LAT, which recruits numerous signaling molecules to form the LAT signalosome. The LAT signalosome propagates signal branching to three major signaling pathways, the calcium, the mitogen-activated protein kinase (MAPK) kinase and the nuclear factor NF-kappa-B (NF-kB) pathways, leading to the mobilization of transcription factors that are critical for gene expression and essential for T cell growth and differentiation. The T cell repertoire is generated in the thymus, by V-(D)-J rearrangement. This repertoire is then shaped by intrathymic selection events to generate a peripheral T cell pool of self-MH restricted, non-autoaggressive T cells. Post-thymic interaction of alpha-beta TR with the pMH complexes shapes TR structural and functional avidity. This is T cell receptor beta constant 1 from Homo sapiens (Human).